The sequence spans 240 residues: Acetoacetyl-CoA reductase (240 aa).

NADP(+) contacts are provided by residues 18 to 20 (RGI) and 82 to 86 (NAGIT). Substrate-binding positions include serine 134 and 141–144 (NVGQ). The active-site Proton acceptor is the tyrosine 147. 177–180 (PGFI) contacts NADP(+). Residue 178-179 (GF) coordinates substrate.

The protein belongs to the short-chain dehydrogenases/reductases (SDR) family.

It carries out the reaction a (3R)-3-hydroxyacyl-CoA + NADP(+) = a 3-oxoacyl-CoA + NADPH + H(+). Its pathway is biopolymer metabolism; poly-(R)-3-hydroxybutanoate biosynthesis. Functionally, catalyzes the reduction of acetoacetyl-CoA to (R)-3-hydroxybutyryl-CoA. When expressed in E.coli with Synechocystis PhaA, PhaC and PhaE confers the ability to synthesize up to 12% (w/w) poly(3-hydroxybutyrate) (PHB) depending on the carbon source. This Synechocystis sp. (strain ATCC 27184 / PCC 6803 / Kazusa) protein is Acetoacetyl-CoA reductase.